The following is a 277-amino-acid chain: Membrane protein insertase YidC 2 (277 aa).

Positions 1 to 22 (MKKYRKILAMLAVLAIVLVLSG) are cleaved as a signal peptide. Residue C23 is the site of N-palmitoyl cysteine attachment. Residue C23 is the site of S-diacylglycerol cysteine attachment. A run of 5 helical transmembrane segments spans residues 35 to 55 (FWDG…SNLF), 60 to 80 (GLGI…LMIF), 130 to 150 (ASML…QAIW), 170 to 190 (PYYV…WLAM), and 208 to 228 (PVII…YWVI). Positions 251 to 266 (EAKKQAERDRKRTLEK) are enriched in basic and acidic residues. The segment at 251 to 277 (EAKKQAERDRKRTLEKARKRAIRNHKR) is disordered. The segment covering 267–277 (ARKRAIRNHKR) has biased composition (basic residues).

This sequence belongs to the OXA1/ALB3/YidC family. Type 2 subfamily.

The protein localises to the cell membrane. Functionally, required for the insertion and/or proper folding and/or complex formation of integral membrane proteins into the membrane. Involved in integration of membrane proteins that insert both dependently and independently of the Sec translocase complex, as well as at least some lipoproteins. The protein is Membrane protein insertase YidC 2 of Lactiplantibacillus plantarum (strain ATCC BAA-793 / NCIMB 8826 / WCFS1) (Lactobacillus plantarum).